The sequence spans 349 residues: MKIQILLFALVLIFVEANAATQGKNTTIPALIVFGDSIMDTGNNNNLPTLLKCNFPPYGKDYPGGFATGRFSDGRVPSDLIAEKLGLAKTLPAYMNPYLKPEDLLKGVTFASGGTGYDPLTAKIMSVISVWDQLINFKEYISKIKRHFGEEKAKDILEHSFFLVVSSSNDLAHTYLAQTHRYDRTSYANFLADSAVHFVRELHKLGARKIGVFSAVPVGCVPLQRTVFGGFFTRGCNQPLNNMAKQFNARLSPALDSLDKELDGVILYINVYDTLFDMIQHPKKYGFEVADRGCCGKGLLAISYLCNSLNPFTCSNSSAYIFWDSYHPSERAYQVIVDNLLDKYLSKVY.

Positions 1–19 are cleaved as a signal peptide; it reads MKIQILLFALVLIFVEANA. The N-linked (GlcNAc...) asparagine glycan is linked to Asn25. Catalysis depends on Ser37, which acts as the Nucleophile. A glycan (N-linked (GlcNAc...) asparagine) is linked at Asn316. Catalysis depends on residues Asp324 and His327.

The protein belongs to the 'GDSL' lipolytic enzyme family.

The protein localises to the secreted. This is GDSL esterase/lipase At1g58725 from Arabidopsis thaliana (Mouse-ear cress).